Here is a 420-residue protein sequence, read N- to C-terminus: Tyrosine--tRNA ligase (420 aa).

An L-tyrosine-binding site is contributed by Y36. Residues 41-50 (PTADSLHIGH) carry the 'HIGH' region motif. Y170 and Q174 together coordinate L-tyrosine. Residues 231-235 (KFGKS) carry the 'KMSKS' region motif. K234 contributes to the ATP binding site. An S4 RNA-binding domain is found at 353 to 420 (TNIVEVLIET…KKKYFMVNYQ (68 aa)).

It belongs to the class-I aminoacyl-tRNA synthetase family. TyrS type 1 subfamily. Homodimer.

The protein resides in the cytoplasm. It catalyses the reaction tRNA(Tyr) + L-tyrosine + ATP = L-tyrosyl-tRNA(Tyr) + AMP + diphosphate + H(+). Functionally, catalyzes the attachment of tyrosine to tRNA(Tyr) in a two-step reaction: tyrosine is first activated by ATP to form Tyr-AMP and then transferred to the acceptor end of tRNA(Tyr). The polypeptide is Tyrosine--tRNA ligase (Staphylococcus aureus (strain COL)).